A 44-amino-acid polypeptide reads, in one-letter code: Cytochrome b559 subunit beta (44 aa).

The helical transmembrane segment at 19–35 (WIAVHTLAVPSVFFLGA) threads the bilayer. Residue His-23 participates in heme binding.

This sequence belongs to the PsbE/PsbF family. In terms of assembly, heterodimer of an alpha subunit and a beta subunit. PSII is composed of 1 copy each of membrane proteins PsbA, PsbB, PsbC, PsbD, PsbE, PsbF, PsbH, PsbI, PsbJ, PsbK, PsbL, PsbM, PsbT, PsbX, PsbY, PsbZ, Psb30/Ycf12, peripheral proteins PsbO, CyanoQ (PsbQ), PsbU, PsbV and a large number of cofactors. It forms dimeric complexes. Requires heme b as cofactor.

It is found in the cellular thylakoid membrane. This b-type cytochrome is tightly associated with the reaction center of photosystem II (PSII). PSII is a light-driven water:plastoquinone oxidoreductase that uses light energy to abstract electrons from H(2)O, generating O(2) and a proton gradient subsequently used for ATP formation. It consists of a core antenna complex that captures photons, and an electron transfer chain that converts photonic excitation into a charge separation. In Cyanothece sp. (strain PCC 7425 / ATCC 29141), this protein is Cytochrome b559 subunit beta.